The following is a 1500-amino-acid chain: Myosin-8 (1500 aa).

In terms of domain architecture, Myosin N-terminal SH3-like spans 8 to 57; it reads AVGSHVWVEDPDEAWLDGEVVEINGDQIKVLCASGKQVVVKDSNIYPKDV. The 671-residue stretch at 62–732 folds into the Myosin motor domain; it reads SGVEDMTRLA…QMADLDTRRT (671 aa). ATP-binding positions include 156 to 163 and 210 to 218; these read GESGAGKT and NNNSSRFGK. Actin-binding stretches follow at residues 496 to 530, 532 to 555, 590 to 613, and 613 to 635; these read LIEK…YQTY, NHKR…AGDV, FPPV…KQQL, and LVSL…KPNN. 6 IQ domains span residues 735–764, 758–787, 783–812, 806–835, 831–860, and 854–883; these read LGRS…SATQ, LRIS…EAAA, REAA…ATIL, LFSA…TKAA, QTKA…AAIT, and LKKA…AARE. A coiled-coil region spans residues 884-1049; it reads TGALQEAKNK…TEKQIMLQQT (166 aa). A Dilute domain is found at 1146–1447; sequence DRLIEMIGSA…ISSMRALMTE (302 aa).

This sequence belongs to the TRAFAC class myosin-kinesin ATPase superfamily. Myosin family. Plant myosin class XI subfamily. In terms of assembly, homodimer.

It is found in the cytoplasm. Functionally, myosin heavy chain that is required for the cell cycle-regulated transport of various organelles and proteins for their segregation. Functions by binding with its tail domain to receptor proteins on organelles and exerting force with its N-terminal motor domain against actin filaments, thereby transporting its cargo along polarized actin cables. The sequence is that of Myosin-8 (XI-B) from Arabidopsis thaliana (Mouse-ear cress).